The sequence spans 469 residues: Interstitial collagenase (469 aa).

Positions 1-19 are cleaved as a signal peptide; it reads MHSFPPLLLLLFWGVVSHS. A propeptide spans 20-99 (activation peptide); that stretch reads FPATLETQEQ…PRCGVPDVAQ (80 aa). S57 carries the phosphoserine modification. Positions 90-97 match the Cysteine switch motif; sequence PRCGVPDV. Zn(2+) is bound at residue C92. Residues 98 to 276 form a metalloprotease region; the sequence is AQFVLTEGNP…VQPIGPQTPK (179 aa). N-linked (GlcNAc...) asparagine glycosylation is present at N120. The Ca(2+) site is built by D124 and D158. 2 residues coordinate Zn(2+): H168 and D170. 4 residues coordinate Ca(2+): D175, G176, G178, and N180. A Zn(2+)-binding site is contributed by H183. G190, G192, and D194 together coordinate Ca(2+). A Zn(2+)-binding site is contributed by H196. D198, E199, and E201 together coordinate Ca(2+). Residue H218 coordinates Zn(2+). The active site involves E219. Positions 222 and 228 each coordinate Zn(2+). Phosphothreonine is present on T274. Hemopexin repeat units lie at residues 275–324, 325–371, 374–422, and 423–466; these read PKAC…WPQL, PNGL…FGFP, VKHI…FPGI, and GHKV…WFNC. A disulfide bridge links C278 with C466. D285 and E329 together coordinate Ca(2+). A Phosphotyrosine; by PKDCC modification is found at Y360. Positions 378 and 427 each coordinate Ca(2+).

This sequence belongs to the peptidase M10A family. In terms of assembly, (Microbial infection) Interacts with HIV-1 Tat. It depends on Ca(2+) as a cofactor. Zn(2+) serves as cofactor. Undergoes autolytic cleavage to two major forms (22 kDa and 27 kDa). A minor form (25 kDa) is the glycosylated form of the 22 kDa form. The 27 kDa form has no activity while the 22/25 kDa form can act as activator for collagenase. Post-translationally, tyrosine phosphorylated in platelets by PKDCC/VLK.

It localises to the secreted. The protein localises to the extracellular space. It is found in the extracellular matrix. It catalyses the reaction Cleavage of the triple helix of collagen at about three-quarters of the length of the molecule from the N-terminus, at 775-Gly-|-Ile-776 in the alpha1(I) chain. Cleaves synthetic substrates and alpha-macroglobulins at bonds where P1' is a hydrophobic residue.. Its activity is regulated as follows. Can be activated without removal of the activation peptide. Functionally, cleaves collagens of types I, II, and III at one site in the helical domain. Also cleaves collagens of types VII and X. In case of HIV infection, interacts and cleaves the secreted viral Tat protein, leading to a decrease in neuronal Tat's mediated neurotoxicity. The protein is Interstitial collagenase (MMP1) of Homo sapiens (Human).